The primary structure comprises 189 residues: Endoribonuclease YbeY (189 aa).

Residues His146, His150, and His156 each contribute to the Zn(2+) site.

This sequence belongs to the endoribonuclease YbeY family. Zn(2+) is required as a cofactor.

Its subcellular location is the cytoplasm. Its function is as follows. Single strand-specific metallo-endoribonuclease involved in late-stage 70S ribosome quality control and in maturation of the 3' terminus of the 16S rRNA. In Prochlorococcus marinus (strain MIT 9211), this protein is Endoribonuclease YbeY.